Consider the following 334-residue polypeptide: Malate dehydrogenase, cytoplasmic (334 aa).

Serine 2 carries the N-acetylserine modification. NAD(+) is bound by residues 11 to 17 (GAAGQIA) and aspartate 42. Substrate-binding residues include arginine 92 and arginine 98. Asparagine 105 is a binding site for NAD(+). Position 110 is an N6-succinyllysine (lysine 110). Residue glutamine 112 coordinates NAD(+). Residues lysine 118 and lysine 121 each carry the N6-acetyllysine modification. 129–131 (VGN) is a binding site for NAD(+). The substrate site is built by asparagine 131 and arginine 162. The Proton acceptor role is filled by histidine 187. Position 214 is an N6-succinyllysine (lysine 214). Residue serine 217 is modified to Phosphoserine. Arginine 230 carries the post-translational modification Omega-N-methylarginine. Serine 241 carries the post-translational modification Phosphoserine. Lysine 298 is subject to N6-acetyllysine; alternate. An N6-succinyllysine; alternate modification is found at lysine 298. At serine 309 the chain carries Phosphoserine. An N6-succinyllysine modification is found at lysine 318. A phosphoserine mark is found at serine 332 and serine 333.

It belongs to the LDH/MDH superfamily. MDH type 2 family. In terms of assembly, homodimer. ISGylated. In terms of processing, acetylation at Lys-118 dramatically enhances enzymatic activity and promotes adipogenic differentiation.

Its subcellular location is the cytoplasm. It is found in the cytosol. It carries out the reaction (S)-malate + NAD(+) = oxaloacetate + NADH + H(+). The enzyme catalyses (2R)-2-hydroxy-3-(4-hydroxyphenyl)propanoate + NAD(+) = 3-(4-hydroxyphenyl)pyruvate + NADH + H(+). It catalyses the reaction (S)-2-hydroxyglutarate + NAD(+) = 2-oxoglutarate + NADH + H(+). Catalyzes the reduction of aromatic alpha-keto acids in the presence of NADH. Plays essential roles in the malate-aspartate shuttle and the tricarboxylic acid cycle, important in mitochondrial NADH supply for oxidative phosphorylation. Catalyzes the reduction of 2-oxoglutarate to 2-hydroxyglutarate, leading to elevated reactive oxygen species (ROS). The polypeptide is Malate dehydrogenase, cytoplasmic (MDH1) (Felis catus (Cat)).